Reading from the N-terminus, the 184-residue chain is MANEQNEQAQDIQNEQVEQSNEQTQAEGVEQANDVTVESLQAQITKLEENLKLEKARTANAVYEAQKSVERIQRESEKHKETVLEKFAKELLDSVDNLERAIQAAGDEETPVLEGVKLTLKSLLTTLEKFGVVEADTQNGFNADLHQAVGIDPNAKANEIGTVLQKGYTLNGRLLRPAMVMVGQ.

Residues 1–26 (MANEQNEQAQDIQNEQVEQSNEQTQA) show a composition bias toward polar residues. Positions 1–34 (MANEQNEQAQDIQNEQVEQSNEQTQAEGVEQAND) are disordered.

This sequence belongs to the GrpE family. Homodimer.

The protein resides in the cytoplasm. In terms of biological role, participates actively in the response to hyperosmotic and heat shock by preventing the aggregation of stress-denatured proteins, in association with DnaK and GrpE. It is the nucleotide exchange factor for DnaK and may function as a thermosensor. Unfolded proteins bind initially to DnaJ; upon interaction with the DnaJ-bound protein, DnaK hydrolyzes its bound ATP, resulting in the formation of a stable complex. GrpE releases ADP from DnaK; ATP binding to DnaK triggers the release of the substrate protein, thus completing the reaction cycle. Several rounds of ATP-dependent interactions between DnaJ, DnaK and GrpE are required for fully efficient folding. In Acinetobacter baumannii (strain AB307-0294), this protein is Protein GrpE.